The primary structure comprises 878 residues: Lon protease 2 (878 aa).

The region spanning 85–281 (LYLLPVKERP…KVLSLFKHEI (197 aa)) is the Lon N-terminal domain. Residue 434 to 441 (GPPGVGKT) participates in ATP binding. In terms of domain architecture, Lon proteolytic spans 668-850 (NQQMGTVTGL…DDVAKLTFHI (183 aa)). Catalysis depends on residues Ser756 and Lys799.

It belongs to the peptidase S16 family. As to quaternary structure, homohexamer. Organized in a ring with a central cavity.

Its subcellular location is the cytoplasm. It catalyses the reaction Hydrolysis of proteins in presence of ATP.. Functionally, ATP-dependent serine protease that mediates the selective degradation of mutant and abnormal proteins as well as certain short-lived regulatory proteins. Required for cellular homeostasis and for survival from DNA damage and developmental changes induced by stress. Degrades polypeptides processively to yield small peptide fragments that are 5 to 10 amino acids long. Binds to DNA in a double-stranded, site-specific manner. The sequence is that of Lon protease 2 from Hydrogenovibrio crunogenus (strain DSM 25203 / XCL-2) (Thiomicrospira crunogena).